A 259-amino-acid polypeptide reads, in one-letter code: Dihydroorotate dehydrogenase B (NAD(+)), electron transfer subunit (259 aa).

An FAD-binding FR-type domain is found at 2–102 (MQKQNMIVVN…LGPLGHGFPV (101 aa)). Residues 53 to 56 (RPIS), 70 to 72 (LYR), and 77 to 78 (GT) each bind FAD. [2Fe-2S] cluster is bound by residues Cys-221, Cys-226, Cys-229, and Cys-246.

It belongs to the PyrK family. In terms of assembly, heterotetramer of 2 PyrK and 2 PyrD type B subunits. [2Fe-2S] cluster serves as cofactor. FAD is required as a cofactor.

Its pathway is pyrimidine metabolism; UMP biosynthesis via de novo pathway; orotate from (S)-dihydroorotate (NAD(+) route): step 1/1. In terms of biological role, responsible for channeling the electrons from the oxidation of dihydroorotate from the FMN redox center in the PyrD type B subunit to the ultimate electron acceptor NAD(+). This Bacillus mycoides (strain KBAB4) (Bacillus weihenstephanensis) protein is Dihydroorotate dehydrogenase B (NAD(+)), electron transfer subunit.